A 92-amino-acid chain; its full sequence is Small ribosomal subunit protein uS19 (92 aa).

This sequence belongs to the universal ribosomal protein uS19 family.

Functionally, protein S19 forms a complex with S13 that binds strongly to the 16S ribosomal RNA. The chain is Small ribosomal subunit protein uS19 from Beijerinckia indica subsp. indica (strain ATCC 9039 / DSM 1715 / NCIMB 8712).